A 482-amino-acid polypeptide reads, in one-letter code: Solute carrier family 49 member A3 (482 aa).

The next 12 helical transmembrane spans lie at Trp-41–Phe-61, Tyr-81–Ile-101, Ala-109–Val-129, Leu-150–Phe-170, Ile-181–Val-201, Tyr-206–Thr-226, Val-264–Leu-284, Leu-296–Cys-316, Val-330–Phe-350, Val-355–Gly-375, Ser-390–Phe-410, and Thr-437–Phe-457.

It belongs to the major facilitator superfamily.

The protein resides in the membrane. The polypeptide is Solute carrier family 49 member A3 (slc49a3) (Xenopus tropicalis (Western clawed frog)).